Reading from the N-terminus, the 278-residue chain is Shikimate dehydrogenase (NADP(+)) (278 aa).

Shikimate is bound by residues 19 to 21 (SFS) and Thr66. Lys70 serves as the catalytic Proton acceptor. Shikimate contacts are provided by Asn91 and Asp106. Residues 130–134 (GSGGA) and Leu222 each bind NADP(+). Residue Tyr224 participates in shikimate binding. Gly245 lines the NADP(+) pocket.

This sequence belongs to the shikimate dehydrogenase family. Homodimer.

The enzyme catalyses shikimate + NADP(+) = 3-dehydroshikimate + NADPH + H(+). It participates in metabolic intermediate biosynthesis; chorismate biosynthesis; chorismate from D-erythrose 4-phosphate and phosphoenolpyruvate: step 4/7. Involved in the biosynthesis of the chorismate, which leads to the biosynthesis of aromatic amino acids. Catalyzes the reversible NADPH linked reduction of 3-dehydroshikimate (DHSA) to yield shikimate (SA). This chain is Shikimate dehydrogenase (NADP(+)), found in Methanococcus maripaludis (strain DSM 14266 / JCM 13030 / NBRC 101832 / S2 / LL).